Consider the following 199-residue polypeptide: Ubiquitin-conjugating enzyme E2-22 kDa (199 aa).

The UBC core domain maps to 4-154; the sequence is MAVSRIKREF…AKHWTNAYAG (151 aa). Catalysis depends on Cys92, which acts as the Glycyl thioester intermediate. One can recognise a UBA domain in the interval 161–199; that stretch reads DCDSKIQRLRDMGIDEHEARAVLSKENWNLEKATEGLFS.

This sequence belongs to the ubiquitin-conjugating enzyme family. In terms of assembly, interacts with Rpn10. In terms of tissue distribution, during gastrulation, expression is highest in the invaginating posterior midgut primordium (PMG), high expression is also observed in the cephalic furrow and ventral ectodermal neurogenic region. In stage 10-11 embryos, expression is high in the pole cells present in the pocket formed by the PMG. During germ band retraction, expression appears to reinitiate in many tissues, especially the gut and nervous system. After dorsal closure, expression is detectable at low levels throughout the embryo.

The catalysed reaction is S-ubiquitinyl-[E1 ubiquitin-activating enzyme]-L-cysteine + [E2 ubiquitin-conjugating enzyme]-L-cysteine = [E1 ubiquitin-activating enzyme]-L-cysteine + S-ubiquitinyl-[E2 ubiquitin-conjugating enzyme]-L-cysteine.. Its pathway is protein modification; protein ubiquitination. Its function is as follows. Catalyzes the covalent attachment of ubiquitin to other proteins. The sequence is that of Ubiquitin-conjugating enzyme E2-22 kDa from Drosophila melanogaster (Fruit fly).